The following is a 963-amino-acid chain: Iron-responsive element-binding protein 2 (963 aa).

[4Fe-4S] cluster is bound by residues Cys512, Cys578, and Cys581.

Belongs to the aconitase/IPM isomerase family. As to quaternary structure, interacts with RBCK1 isoform 1 and isoform 2 only in iron-rich conditions. Interacts (when associated with the 4Fe-4S) with FBXL5. Interacts with CIAO1 and CIAO2A. [4Fe-4S] cluster is required as a cofactor. In terms of processing, ubiquitinated and degraded by the proteasome in presence of high level of iron and oxygen. Ubiquitinated by a SCF complex containing FBXL5. Upon iron and oxygen depletion FBXL5 is degraded, preventing ubiquitination and allowing its RNA-binding activity.

Its subcellular location is the cytoplasm. Functionally, RNA-binding protein that binds to iron-responsive elements (IRES), which are stem-loop structures found in the 5'-UTR of ferritin, and delta aminolevulinic acid synthase mRNAs, and in the 3'-UTR of transferrin receptor mRNA. Binding to the IRE element in ferritin results in the repression of its mRNA translation. Binding of the protein to the transferrin receptor mRNA inhibits the degradation of this otherwise rapidly degraded mRNA. This chain is Iron-responsive element-binding protein 2 (IREB2), found in Homo sapiens (Human).